Reading from the N-terminus, the 210-residue chain is Thiamine-phosphate synthase (210 aa).

Residues 43–47 and N75 contribute to the 4-amino-2-methyl-5-(diphosphooxymethyl)pyrimidine site; that span reads QLREK. Mg(2+) is bound by residues D76 and D95. S114 serves as a coordination point for 4-amino-2-methyl-5-(diphosphooxymethyl)pyrimidine. 140–142 serves as a coordination point for 2-[(2R,5Z)-2-carboxy-4-methylthiazol-5(2H)-ylidene]ethyl phosphate; it reads TST. K143 contacts 4-amino-2-methyl-5-(diphosphooxymethyl)pyrimidine. Residues G170 and 190-191 each bind 2-[(2R,5Z)-2-carboxy-4-methylthiazol-5(2H)-ylidene]ethyl phosphate; that span reads IS.

Belongs to the thiamine-phosphate synthase family. Requires Mg(2+) as cofactor.

It carries out the reaction 2-[(2R,5Z)-2-carboxy-4-methylthiazol-5(2H)-ylidene]ethyl phosphate + 4-amino-2-methyl-5-(diphosphooxymethyl)pyrimidine + 2 H(+) = thiamine phosphate + CO2 + diphosphate. The catalysed reaction is 2-(2-carboxy-4-methylthiazol-5-yl)ethyl phosphate + 4-amino-2-methyl-5-(diphosphooxymethyl)pyrimidine + 2 H(+) = thiamine phosphate + CO2 + diphosphate. The enzyme catalyses 4-methyl-5-(2-phosphooxyethyl)-thiazole + 4-amino-2-methyl-5-(diphosphooxymethyl)pyrimidine + H(+) = thiamine phosphate + diphosphate. Its pathway is cofactor biosynthesis; thiamine diphosphate biosynthesis; thiamine phosphate from 4-amino-2-methyl-5-diphosphomethylpyrimidine and 4-methyl-5-(2-phosphoethyl)-thiazole: step 1/1. In terms of biological role, condenses 4-methyl-5-(beta-hydroxyethyl)thiazole monophosphate (THZ-P) and 2-methyl-4-amino-5-hydroxymethyl pyrimidine pyrophosphate (HMP-PP) to form thiamine monophosphate (TMP). This chain is Thiamine-phosphate synthase, found in Clostridioides difficile (strain 630) (Peptoclostridium difficile).